Reading from the N-terminus, the 550-residue chain is Small ribosomal subunit protein uS3m (550 aa).

Residues 112-133 are disordered; the sequence is NDDTEEERNEVGGRGAGKRVES.

Belongs to the universal ribosomal protein uS3 family.

The protein resides in the mitochondrion. The protein is Small ribosomal subunit protein uS3m (RPS3) of Oenothera berteroana (Bertero's evening primrose).